The chain runs to 591 residues: V-type ATP synthase alpha chain (591 aa).

233-240 lines the ATP pocket; sequence GPFGAGKT.

Belongs to the ATPase alpha/beta chains family.

It carries out the reaction ATP + H2O + 4 H(+)(in) = ADP + phosphate + 5 H(+)(out). Functionally, produces ATP from ADP in the presence of a proton gradient across the membrane. The V-type alpha chain is a catalytic subunit. The polypeptide is V-type ATP synthase alpha chain (Streptococcus pyogenes serotype M28 (strain MGAS6180)).